A 285-amino-acid polypeptide reads, in one-letter code: MALAAPPGELTLALTPDDKTLDPASLDRALAILAEHGILVLTGMLRTRLTDQLRTAMLDDLPEVLRQQDVPTNFVPGHVQQDPPVRESLLFPDVLLNPVVYQITHAVLGADARNAVYSGNMNLPGSHEQPVHLDEPHLWPGISHPPYCLCVDVPLIDFTLENGSTEYWPGSHVLNPDECYDERGCVLPAELERRRAVAPPVRFPIPVGSVVIRDGRLWHRGVPNLSAAPRPLLAMTHYTEWFDMPPIQLPDTVKSWVDGSDRHTHAHFVAGDVDHLTGDHPFAVR.

It belongs to the PhyH family. Requires Fe cation as cofactor.

The enzyme catalyses kanamycin B + 2-oxoglutarate + O2 = 2'-dehydrokanamycin A + succinate + NH4(+) + CO2. It functions in the pathway antibiotic biosynthesis; kanamycin biosynthesis. In terms of biological role, mediates the conversion of kanamycin B into 2'-dehydrokanamycin A during the transformation of kanamycin B to kanamycin A. The sequence is that of Kanamycin B dioxygenase (kanJ) from Streptomyces kanamyceticus.